Consider the following 393-residue polypeptide: Phosphopentomutase (393 aa).

Positions 11, 282, 287, 323, 324, and 335 each coordinate Mn(2+).

This sequence belongs to the phosphopentomutase family. Mn(2+) serves as cofactor.

The protein resides in the cytoplasm. The enzyme catalyses 2-deoxy-alpha-D-ribose 1-phosphate = 2-deoxy-D-ribose 5-phosphate. The catalysed reaction is alpha-D-ribose 1-phosphate = D-ribose 5-phosphate. Its pathway is carbohydrate degradation; 2-deoxy-D-ribose 1-phosphate degradation; D-glyceraldehyde 3-phosphate and acetaldehyde from 2-deoxy-alpha-D-ribose 1-phosphate: step 1/2. In terms of biological role, isomerase that catalyzes the conversion of deoxy-ribose 1-phosphate (dRib-1-P) and ribose 1-phosphate (Rib-1-P) to deoxy-ribose 5-phosphate (dRib-5-P) and ribose 5-phosphate (Rib-5-P), respectively. This Caldanaerobacter subterraneus subsp. tengcongensis (strain DSM 15242 / JCM 11007 / NBRC 100824 / MB4) (Thermoanaerobacter tengcongensis) protein is Phosphopentomutase.